Consider the following 114-residue polypeptide: Cyclin-dependent kinase 2-associated protein 1 (114 aa).

Residues 18 to 57 form a disordered region; it reads AGSVHSPSTSMATSSQYRQLLSDYGPPSLGYTQGTGNSQV. An interaction with CDK2AP2 region spans residues 19-24; sequence GSVHSP. The segment covering 20–36 has biased composition (polar residues); it reads SVHSPSTSMATSSQYRQ. A Phosphoserine; by IKKE modification is found at S45. Residues 47 to 57 are compositionally biased toward polar residues; the sequence is GYTQGTGNSQV.

This sequence belongs to the CDK2AP family. In terms of assembly, homodimer. Component of the nucleosome remodeling and deacetylase (NuRD) repressor complex, composed of core proteins MTA1, MTA2, MTA3, RBBP4, RBBP7, HDAC1, HDAC2, MBD2, MBD3, and peripherally associated proteins CDK2AP1, CDK2AP2, GATAD2A, GATAD2B, CHD3, CHD4 and CHD5. The exact stoichiometry of the NuRD complex is unknown, and some subunits such as MBD2 and MBD3, GATAD2A and GATAD2B, and CHD3, CHD4 and CHD5 define mutually exclusive NuRD complexes. Interacts with monomeric unphosphorylated CDK2. Interacts with CDK2AP2. Interacts with GATAD2A. Interacts with HDAC1. Interacts with HDAC2. Interacts with MBD2. Interacts with MBD3. Interacts with RBBP4. Interacts with RBBP7. Phosphorylated in vitro by IKBKE at Ser-45.

Its subcellular location is the nucleus. It is found in the chromosome. Its function is as follows. Inhibitor of cyclin-dependent kinase CDK2. Also acts as a component of the histone deacetylase NuRD complex which participates in the remodeling of chromatin. In Mus musculus (Mouse), this protein is Cyclin-dependent kinase 2-associated protein 1 (Cdk2ap1).